The sequence spans 94 residues: Large ribosomal subunit protein uL23 (94 aa).

Belongs to the universal ribosomal protein uL23 family. Part of the 50S ribosomal subunit. Contacts protein L29, and trigger factor when it is bound to the ribosome.

In terms of biological role, one of the early assembly proteins it binds 23S rRNA. One of the proteins that surrounds the polypeptide exit tunnel on the outside of the ribosome. Forms the main docking site for trigger factor binding to the ribosome. This Lysinibacillus sphaericus (strain C3-41) protein is Large ribosomal subunit protein uL23.